The following is a 259-amino-acid chain: Pyrroloquinoline-quinone synthase (259 aa).

It belongs to the PqqC family.

The enzyme catalyses 6-(2-amino-2-carboxyethyl)-7,8-dioxo-1,2,3,4,7,8-hexahydroquinoline-2,4-dicarboxylate + 3 O2 = pyrroloquinoline quinone + 2 H2O2 + 2 H2O + H(+). The protein operates within cofactor biosynthesis; pyrroloquinoline quinone biosynthesis. Functionally, ring cyclization and eight-electron oxidation of 3a-(2-amino-2-carboxyethyl)-4,5-dioxo-4,5,6,7,8,9-hexahydroquinoline-7,9-dicarboxylic-acid to PQQ. This Bradyrhizobium sp. (strain ORS 278) protein is Pyrroloquinoline-quinone synthase.